Here is a 248-residue protein sequence, read N- to C-terminus: 2,3-bisphosphoglycerate-dependent phosphoglycerate mutase (248 aa).

Residues 8 to 15 (RHGESEWN), 21 to 22 (TG), R60, 87 to 90 (ERHY), K98, 114 to 115 (RR), and 183 to 184 (GN) contribute to the substrate site. H9 functions as the Tele-phosphohistidine intermediate in the catalytic mechanism. The active-site Proton donor/acceptor is the E87.

The protein belongs to the phosphoglycerate mutase family. BPG-dependent PGAM subfamily.

It carries out the reaction (2R)-2-phosphoglycerate = (2R)-3-phosphoglycerate. It functions in the pathway carbohydrate degradation; glycolysis; pyruvate from D-glyceraldehyde 3-phosphate: step 3/5. In terms of biological role, catalyzes the interconversion of 2-phosphoglycerate and 3-phosphoglycerate. This is 2,3-bisphosphoglycerate-dependent phosphoglycerate mutase from Borreliella afzelii (strain PKo) (Borrelia afzelii).